A 107-amino-acid chain; its full sequence is MIPGEMLVEPGDIELNVGRATATVKVANSGDRPIQVGSHFHFYETNPALKFDRAIGYGMRLNITAGTAVRFEPGQERTVELVALAGDRKVYGFNGKVMGALDKKEGK.

Belongs to the urease beta subunit family. Heterotrimer of UreA (gamma), UreB (beta) and UreC (alpha) subunits. Three heterotrimers associate to form the active enzyme.

Its subcellular location is the cytoplasm. The enzyme catalyses urea + 2 H2O + H(+) = hydrogencarbonate + 2 NH4(+). The protein operates within nitrogen metabolism; urea degradation; CO(2) and NH(3) from urea (urease route): step 1/1. This is Urease subunit beta from Janthinobacterium sp. (strain Marseille) (Minibacterium massiliensis).